The sequence spans 293 residues: ATP synthase gamma chain (293 aa).

It belongs to the ATPase gamma chain family. In terms of assembly, F-type ATPases have 2 components, CF(1) - the catalytic core - and CF(0) - the membrane proton channel. CF(1) has five subunits: alpha(3), beta(3), gamma(1), delta(1), epsilon(1). CF(0) has three main subunits: a, b and c.

The protein localises to the cell inner membrane. In terms of biological role, produces ATP from ADP in the presence of a proton gradient across the membrane. The gamma chain is believed to be important in regulating ATPase activity and the flow of protons through the CF(0) complex. This chain is ATP synthase gamma chain, found in Gluconacetobacter diazotrophicus (strain ATCC 49037 / DSM 5601 / CCUG 37298 / CIP 103539 / LMG 7603 / PAl5).